We begin with the raw amino-acid sequence, 37 residues long: Omega-conotoxin-like S6.7 (37 aa).

Residues 1–4 (KSTS) constitute a propeptide that is removed on maturation. 3 disulfides stabilise this stretch: C5–C20, C12–C23, and C19–C32.

This sequence belongs to the conotoxin O1 superfamily. As to expression, expressed by the venom duct.

It localises to the secreted. Its function is as follows. Omega-conotoxins act at presynaptic membranes, they bind and block voltage-gated calcium channels (Cav). This toxin blocks N-, P- and Q-type calcium channels. The protein is Omega-conotoxin-like S6.7 of Conus striatus (Striated cone).